Consider the following 186-residue polypeptide: ATP synthase subunit delta (186 aa).

It belongs to the ATPase delta chain family. As to quaternary structure, F-type ATPases have 2 components, F(1) - the catalytic core - and F(0) - the membrane proton channel. F(1) has five subunits: alpha(3), beta(3), gamma(1), delta(1), epsilon(1). F(0) has three main subunits: a(1), b(2) and c(10-14). The alpha and beta chains form an alternating ring which encloses part of the gamma chain. F(1) is attached to F(0) by a central stalk formed by the gamma and epsilon chains, while a peripheral stalk is formed by the delta and b chains.

It is found in the cell inner membrane. Functionally, f(1)F(0) ATP synthase produces ATP from ADP in the presence of a proton or sodium gradient. F-type ATPases consist of two structural domains, F(1) containing the extramembraneous catalytic core and F(0) containing the membrane proton channel, linked together by a central stalk and a peripheral stalk. During catalysis, ATP synthesis in the catalytic domain of F(1) is coupled via a rotary mechanism of the central stalk subunits to proton translocation. This protein is part of the stalk that links CF(0) to CF(1). It either transmits conformational changes from CF(0) to CF(1) or is implicated in proton conduction. This Bradyrhizobium diazoefficiens (strain JCM 10833 / BCRC 13528 / IAM 13628 / NBRC 14792 / USDA 110) protein is ATP synthase subunit delta.